The chain runs to 365 residues: Carbamoyl phosphate synthase small chain (365 aa).

2 CPSase regions span residues 1 to 166 and 1 to 169; these read MKRQ…PSPG and MKRQ…GRGH. L-glutamine contacts are provided by S45, G218, and G220. A Glutamine amidotransferase type-1 domain is found at 170-357; the sequence is RVVLVDFGMK…LTMIENFKKE (188 aa). C245 (nucleophile) is an active-site residue. Residues L246, Q249, N287, G289, and Y290 each contribute to the L-glutamine site. Active-site residues include H330 and E332.

The protein belongs to the CarA family. As to quaternary structure, composed of two chains; the small (or glutamine) chain promotes the hydrolysis of glutamine to ammonia, which is used by the large (or ammonia) chain to synthesize carbamoyl phosphate. Tetramer of heterodimers (alpha,beta)4.

It carries out the reaction hydrogencarbonate + L-glutamine + 2 ATP + H2O = carbamoyl phosphate + L-glutamate + 2 ADP + phosphate + 2 H(+). It catalyses the reaction L-glutamine + H2O = L-glutamate + NH4(+). It functions in the pathway amino-acid biosynthesis; L-arginine biosynthesis; carbamoyl phosphate from bicarbonate: step 1/1. Its pathway is pyrimidine metabolism; UMP biosynthesis via de novo pathway; (S)-dihydroorotate from bicarbonate: step 1/3. In terms of biological role, small subunit of the glutamine-dependent carbamoyl phosphate synthetase (CPSase). CPSase catalyzes the formation of carbamoyl phosphate from the ammonia moiety of glutamine, carbonate, and phosphate donated by ATP, constituting the first step of 2 biosynthetic pathways, one leading to arginine and/or urea and the other to pyrimidine nucleotides. The small subunit (glutamine amidotransferase) binds and cleaves glutamine to supply the large subunit with the substrate ammonia. The sequence is that of Carbamoyl phosphate synthase small chain from Bacillus cereus (strain ZK / E33L).